A 288-amino-acid polypeptide reads, in one-letter code: THO complex subunit 4D (288 aa).

The segment at 1-55 (MSGALNMTLDEIVKRGKTARSGGRGISRGRGRGRGGGGRGAGPARRGPLAVNARP) is disordered. Ser2 is modified (N-acetylserine). The region spanning 93–170 (TRLHVTNLDQ…RPMRLEILGG (78 aa)) is the RRM domain. Residues 201–288 (QGGGGRGRVR…SYHADAMNTS (88 aa)) form a disordered region. Gly residues predominate over residues 232 to 260 (QGGGMRGGRGGFRARGRGNGGRGRGGGRG). Over residues 264-281 (KPVEKSAADLDKDLESYH) the composition is skewed to basic and acidic residues.

The protein belongs to the ALYREF family. As to quaternary structure, interacts with PARP1. Interacts with EIF4A3.

It localises to the nucleus. Its subcellular location is the nucleoplasm. The protein resides in the nucleolus. Functionally, export adapter involved in nuclear export of spliced and unspliced mRNA. Plays a role in disease resistance. Mediates multiple defense responses triggered by NEP1, including stomatal closure, hypersensitive cell death (HCD) and defense-related gene expression. This chain is THO complex subunit 4D, found in Arabidopsis thaliana (Mouse-ear cress).